Consider the following 387-residue polypeptide: Phosphoglycerate kinase (387 aa).

Residues 21 to 23, arginine 36, 59 to 62, arginine 113, and arginine 146 each bind substrate; these read DLN and HLGR. Residues lysine 197, glutamate 314, and 340–343 contribute to the ATP site; that span reads GGDT.

This sequence belongs to the phosphoglycerate kinase family. Monomer.

It localises to the cytoplasm. The catalysed reaction is (2R)-3-phosphoglycerate + ATP = (2R)-3-phospho-glyceroyl phosphate + ADP. It functions in the pathway carbohydrate degradation; glycolysis; pyruvate from D-glyceraldehyde 3-phosphate: step 2/5. This chain is Phosphoglycerate kinase, found in Pseudomonas fluorescens (strain ATCC BAA-477 / NRRL B-23932 / Pf-5).